The primary structure comprises 474 residues: Trehalose-6-phosphate synthase (474 aa).

Residue arginine 10 coordinates D-glucose 6-phosphate. Residue 22–23 (GG) participates in UDP-alpha-D-glucose binding. 2 residues coordinate D-glucose 6-phosphate: tyrosine 77 and aspartate 131. UDP-alpha-D-glucose is bound by residues arginine 263 and lysine 268. A D-glucose 6-phosphate-binding site is contributed by arginine 301. UDP-alpha-D-glucose contacts are provided by residues phenylalanine 340 and 366–370 (LVAKE).

It belongs to the glycosyltransferase 20 family. Homotetramer.

It carries out the reaction D-glucose 6-phosphate + UDP-alpha-D-glucose = alpha,alpha-trehalose 6-phosphate + UDP + H(+). The protein operates within glycan biosynthesis; trehalose biosynthesis. Functionally, probably involved in the osmoprotection via the biosynthesis of trehalose. Catalyzes the transfer of glucose from UDP-alpha-D-glucose (UDP-Glc) to D-glucose 6-phosphate (Glc-6-P) to form trehalose-6-phosphate. Acts with retention of the anomeric configuration of the UDP-sugar donor. This is Trehalose-6-phosphate synthase from Shigella dysenteriae serotype 1 (strain Sd197).